Reading from the N-terminus, the 876-residue chain is Alanine--tRNA ligase (876 aa).

Residue K74 is modified to N6-acetyllysine. Zn(2+) contacts are provided by H564, H568, C666, and H670.

The protein belongs to the class-II aminoacyl-tRNA synthetase family. Homotetramer. Requires Zn(2+) as cofactor.

Its subcellular location is the cytoplasm. The enzyme catalyses tRNA(Ala) + L-alanine + ATP = L-alanyl-tRNA(Ala) + AMP + diphosphate. Catalyzes the attachment of alanine to tRNA(Ala) in a two-step reaction: alanine is first activated by ATP to form Ala-AMP and then transferred to the acceptor end of tRNA(Ala). Also edits incorrectly charged Ser-tRNA(Ala) and Gly-tRNA(Ala) via its editing domain. In Escherichia coli O9:H4 (strain HS), this protein is Alanine--tRNA ligase.